The sequence spans 101 residues: Integration host factor subunit beta (101 aa).

Residues 57 to 101 form a disordered region; that stretch reads PARAGRNPRTGAHVPVDQKSVPFFKTGKEMRERLNRDHPDPGAAD. The segment covering 82-101 has biased composition (basic and acidic residues); the sequence is TGKEMRERLNRDHPDPGAAD.

Belongs to the bacterial histone-like protein family. As to quaternary structure, heterodimer of an alpha and a beta chain.

Its function is as follows. This protein is one of the two subunits of integration host factor, a specific DNA-binding protein that functions in genetic recombination as well as in transcriptional and translational control. This Bradyrhizobium diazoefficiens (strain JCM 10833 / BCRC 13528 / IAM 13628 / NBRC 14792 / USDA 110) protein is Integration host factor subunit beta.